A 259-amino-acid chain; its full sequence is Proliferating cell nuclear antigen (259 aa).

Residues Arg61–Arg80 mediate DNA binding. Lys164 participates in a covalent cross-link: Glycyl lysine isopeptide (Lys-Gly) (interchain with G-Cter in SUMO); alternate. Lys164 participates in a covalent cross-link: Glycyl lysine isopeptide (Lys-Gly) (interchain with G-Cter in ubiquitin); alternate.

This sequence belongs to the PCNA family. In terms of assembly, homotrimer. Post-translationally, monoubiquitinated on Lys-164 upon DNA damage, and then polyubiquitinated through 'Lys-63'-linkage.

It localises to the nucleus. This protein is an auxiliary protein of DNA polymerase delta and is involved in the control of eukaryotic DNA replication by increasing the polymerase's processibility during elongation of the leading strand. Involved in DNA repair. The chain is Proliferating cell nuclear antigen from Chaetomium thermophilum (strain DSM 1495 / CBS 144.50 / IMI 039719) (Thermochaetoides thermophila).